Here is a 162-residue protein sequence, read N- to C-terminus: Nucleotide-binding protein SAV_4896 (162 aa).

This sequence belongs to the YajQ family.

In terms of biological role, nucleotide-binding protein. The protein is Nucleotide-binding protein SAV_4896 of Streptomyces avermitilis (strain ATCC 31267 / DSM 46492 / JCM 5070 / NBRC 14893 / NCIMB 12804 / NRRL 8165 / MA-4680).